A 98-amino-acid chain; its full sequence is NADH-ubiquinone oxidoreductase chain 4L (98 aa).

3 consecutive transmembrane segments (helical) span residues 1–21 (MSLT…GLLL), 29–49 (SLLC…MVIL), and 61–81 (IILL…LVMV).

The protein belongs to the complex I subunit 4L family. In terms of assembly, core subunit of respiratory chain NADH dehydrogenase (Complex I) which is composed of 45 different subunits.

Its subcellular location is the mitochondrion inner membrane. It catalyses the reaction a ubiquinone + NADH + 5 H(+)(in) = a ubiquinol + NAD(+) + 4 H(+)(out). Its function is as follows. Core subunit of the mitochondrial membrane respiratory chain NADH dehydrogenase (Complex I) which catalyzes electron transfer from NADH through the respiratory chain, using ubiquinone as an electron acceptor. Part of the enzyme membrane arm which is embedded in the lipid bilayer and involved in proton translocation. The sequence is that of NADH-ubiquinone oxidoreductase chain 4L (MT-ND4L) from Platyrrhinus helleri (Heller's broad-nosed bat).